A 1025-amino-acid polypeptide reads, in one-letter code: Dihydropyrimidine dehydrogenase [NADP(+)] (1025 aa).

The propeptide occupies 1 to 3 (MAP). A 4Fe-4S ferredoxin-type 1 domain is found at 69–100 (ERGALREAMRCLKCADAPCQKSCPTHLDIKSF). [4Fe-4S] cluster is bound by residues Cys-79, Cys-82, Cys-87, and Cys-91. Val-129 contacts FAD. Positions 130, 136, 140, and 156 each coordinate [4Fe-4S] cluster. FAD is bound by residues 194 to 198 (GAGPA), 218 to 226 (EKQEYVGGL), Arg-235, and Leu-261. Residues 340-343 (AGDT), 364-365 (RK), and Arg-371 each bind NADP(+). Lys-384 carries the post-translational modification N6-acetyllysine. NADP(+) contacts are provided by residues 437–439 (AFG) and 481–487 (DIVGMAN). Residue 480 to 489 (GDIVGMANTT) participates in FAD binding. Residues Ser-550 and 574-575 (KT) contribute to the FMN site. Residues Asn-609 and 668-670 (NLS) contribute to the substrate site. The Proton acceptor role is filled by Cys-671. Lys-709 is an FMN binding site. 736-737 (NT) lines the substrate pocket. Residues Gly-767, 793-795 (TGG), and 816-817 (CS) contribute to the FMN site. 2 4Fe-4S ferredoxin-type domains span residues 944 to 976 (VVAV…FDPE) and 978 to 1007 (HLPT…MVSR). 8 residues coordinate [4Fe-4S] cluster: Cys-953, Cys-956, Cys-959, Cys-963, Cys-986, Cys-989, Cys-992, and Cys-996.

Belongs to the dihydropyrimidine dehydrogenase family. As to quaternary structure, homodimer. The cofactor is FAD. FMN is required as a cofactor. It depends on [4Fe-4S] cluster as a cofactor.

The protein localises to the cytoplasm. The enzyme catalyses 5,6-dihydrouracil + NADP(+) = uracil + NADPH + H(+). It carries out the reaction 5,6-dihydrothymine + NADP(+) = thymine + NADPH + H(+). It functions in the pathway amino-acid biosynthesis; beta-alanine biosynthesis. With respect to regulation, inactivated by 5-iodouracil. Involved in pyrimidine base degradation. Catalyzes the reduction of uracil and thymine. This is Dihydropyrimidine dehydrogenase [NADP(+)] (DPYD) from Sus scrofa (Pig).